The primary structure comprises 498 residues: tRNA-2-methylthio-N(6)-dimethylallyladenosine synthase (498 aa).

Positions proline 2–isoleucine 118 constitute an MTTase N-terminal domain. 6 residues coordinate [4Fe-4S] cluster: cysteine 11, cysteine 47, cysteine 81, cysteine 163, cysteine 167, and cysteine 170. In terms of domain architecture, Radical SAM core spans proline 149–alanine 393. The 72-residue stretch at serine 396–glutamate 467 folds into the TRAM domain. The interval alanine 469 to glycine 498 is disordered.

This sequence belongs to the methylthiotransferase family. MiaB subfamily. As to quaternary structure, monomer. [4Fe-4S] cluster serves as cofactor.

It is found in the cytoplasm. The catalysed reaction is N(6)-dimethylallyladenosine(37) in tRNA + (sulfur carrier)-SH + AH2 + 2 S-adenosyl-L-methionine = 2-methylsulfanyl-N(6)-dimethylallyladenosine(37) in tRNA + (sulfur carrier)-H + 5'-deoxyadenosine + L-methionine + A + S-adenosyl-L-homocysteine + 2 H(+). Its function is as follows. Catalyzes the methylthiolation of N6-(dimethylallyl)adenosine (i(6)A), leading to the formation of 2-methylthio-N6-(dimethylallyl)adenosine (ms(2)i(6)A) at position 37 in tRNAs that read codons beginning with uridine. This is tRNA-2-methylthio-N(6)-dimethylallyladenosine synthase from Sorangium cellulosum (strain So ce56) (Polyangium cellulosum (strain So ce56)).